Consider the following 89-residue polypeptide: Small ribosomal subunit protein uS17 (89 aa).

The protein belongs to the universal ribosomal protein uS17 family. As to quaternary structure, part of the 30S ribosomal subunit.

One of the primary rRNA binding proteins, it binds specifically to the 5'-end of 16S ribosomal RNA. The polypeptide is Small ribosomal subunit protein uS17 (Nocardia farcinica (strain IFM 10152)).